An 87-amino-acid polypeptide reads, in one-letter code: Defensin-A (87 aa).

The first 19 residues, 1–19 (MKFYLVLAFLTLCAVAVTA), serve as a signal peptide directing secretion. Positions 20-44 (LPAGDETRIDLETLEEDLRLVDGAQ) are excised as a propeptide. Disulfide bonds link C57-C78, C64-C83, and C68-C85.

Hemolymph and fat body.

Its subcellular location is the secreted. Its function is as follows. Antibacterial peptide mostly active against Gram-positive and Gram negative bacteria. The chain is Defensin-A from Glossina morsitans morsitans (Savannah tsetse fly).